The sequence spans 289 residues: Rhodopsin (289 aa).

Residues Y1–A7 are Extracellular-facing. A helical transmembrane segment spans residues Y8 to V32. Over T33–N44 the chain is Cytoplasmic. A helical transmembrane segment spans residues Y45–Y67. Residues T68 to C81 are Extracellular-facing. C81 and C158 are oxidised to a cystine. A helical transmembrane segment spans residues N82–I104. Positions E105–W107 match the 'Ionic lock' involved in activated form stabilization motif. Residues E105–H123 are Cytoplasmic-facing. A helical transmembrane segment spans residues A124–V144. Residues G145 to S173 are Extracellular-facing. N171 carries an N-linked (GlcNAc...) asparagine glycan. Residues F174–G195 traverse the membrane as a helical segment. Residues R196–R223 lie on the Cytoplasmic side of the membrane. A helical transmembrane segment spans residues M224–W245. Over I246–I257 the chain is Extracellular. Residues F258–C279 form a helical membrane-spanning segment. An N6-(retinylidene)lysine modification is found at K267. At M280–I289 the chain is on the cytoplasmic side.

Belongs to the G-protein coupled receptor 1 family. Opsin subfamily. Phosphorylated on some or all of the serine and threonine residues present in the C-terminal region. In terms of processing, contains one covalently linked retinal chromophore.

The protein localises to the membrane. It localises to the cell projection. The protein resides in the cilium. It is found in the photoreceptor outer segment. Functionally, photoreceptor required for image-forming vision at low light intensity. While most salt water fish species use retinal as chromophore, most freshwater fish use 3-dehydroretinal, or a mixture of retinal and 3-dehydroretinal. Light-induced isomerization of 11-cis to all-trans retinal triggers a conformational change that activates signaling via G-proteins. Subsequent receptor phosphorylation mediates displacement of the bound G-protein alpha subunit by arrestin and terminates signaling. In Cottinella boulengeri (Short-headed sculpin), this protein is Rhodopsin (rho).